Consider the following 47-residue polypeptide: Protein YqgG (47 aa).

This is Protein YqgG from Escherichia coli (strain K12).